A 204-amino-acid chain; its full sequence is Tat proofreading chaperone DmsD (204 aa).

It belongs to the TorD/DmsD family. DmsD subfamily.

In terms of biological role, required for biogenesis/assembly of DMSO reductase, but not for the interaction of the DmsA signal peptide with the Tat system. May be part of a chaperone cascade complex that facilitates a folding-maturation pathway for the substrate protein. This is Tat proofreading chaperone DmsD from Salmonella typhi.